The following is a 205-amino-acid chain: Lymphotoxin-alpha (205 aa).

The N-terminal stretch at 1–34 (MTPPERLFLSRVRGTPLHLLLLGLLLVLLPGAQG) is a signal peptide. Residue threonine 41 is glycosylated (O-linked (GalNAc...) threonine). The region spanning 63–205 (PAAHLIGDPS…STVFFGAFAL (143 aa)) is the THD domain. The N-linked (GlcNAc...) asparagine glycan is linked to asparagine 96.

It belongs to the tumor necrosis factor family. Homotrimer, and heterotrimer of either two LTB and one LTA subunits or (less prevalent) two LTA and one LTB subunits. Interacts with TNFRSF14.

It localises to the secreted. The protein localises to the membrane. Functionally, cytokine that in its homotrimeric form binds to TNFRSF1A/TNFR1, TNFRSF1B/TNFBR and TNFRSF14/HVEM. In its heterotrimeric form with LTB binds to TNFRSF3/LTBR. Lymphotoxin is produced by lymphocytes and is cytotoxic for a wide range of tumor cells in vitro and in vivo. The polypeptide is Lymphotoxin-alpha (LTA) (Macaca mulatta (Rhesus macaque)).